Reading from the N-terminus, the 473-residue chain is Glutamate--tRNA ligase 1 (473 aa).

The 'HIGH' region motif lies at Pro23–Gly33. The short motif at Lys252 to Arg256 is the 'KMSKS' region element. Lys255 is a binding site for ATP.

This sequence belongs to the class-I aminoacyl-tRNA synthetase family. Glutamate--tRNA ligase type 1 subfamily. As to quaternary structure, monomer.

The protein resides in the cytoplasm. The enzyme catalyses tRNA(Glu) + L-glutamate + ATP = L-glutamyl-tRNA(Glu) + AMP + diphosphate. Catalyzes the attachment of glutamate to tRNA(Glu) in a two-step reaction: glutamate is first activated by ATP to form Glu-AMP and then transferred to the acceptor end of tRNA(Glu). This is Glutamate--tRNA ligase 1 from Granulibacter bethesdensis (strain ATCC BAA-1260 / CGDNIH1).